A 178-amino-acid polypeptide reads, in one-letter code: Thymidine kinase (178 aa).

13 to 20 (GPMFAGKS) contributes to the ATP binding site. Catalysis depends on Glu85, which acts as the Proton acceptor. Substrate is bound at residue Phe115. Residues Cys140 and Cys143 each coordinate Zn(2+). Substrate is bound at residue 159–163 (IEIIG). Cys172 and Cys175 together coordinate Zn(2+).

It belongs to the thymidine kinase family.

It catalyses the reaction thymidine + ATP = dTMP + ADP + H(+). The chain is Thymidine kinase (TK) from Myxoma virus (strain Uriarra) (MYXV).